The sequence spans 534 residues: Probable inorganic phosphate transporter 1-8 (534 aa).

The Cytoplasmic segment spans residues 1-21 (MPIKVLSSLDVARTQWYHFKA). The helical transmembrane segment at 22–42 (IIVAGMGLFTDAYDLFCIAPV) threads the bilayer. The Extracellular portion of the chain corresponds to 43 to 61 (MKMISHVYYNGDSINTAVL). A helical membrane pass occupies residues 62–82 (STSYAIALLGTATGQLVFGYL). The Cytoplasmic segment spans residues 83 to 90 (GDRVGRRR). Residues 91–111 (VYGLCLIIMILSSFGCGFSVC) form a helical membrane-spanning segment. Residues 112 to 123 (TTRRSCVMVSLG) are Extracellular-facing. Residues 124–144 (FFRFFLGLGIGGDYPLSATIM) traverse the membrane as a helical segment. At 145 to 153 (SEFANKRTR) the chain is on the cytoplasmic side. A helical transmembrane segment spans residues 154 to 174 (GAFIAAVFSMQGLGILVSSAV). Topologically, residues 175–199 (TMAVCVAFKRSGGGLEVDAAAPTEA) are extracellular. The chain crosses the membrane as a helical span at residues 200–220 (DLAWRLILMIGALPAALTFYW). The Cytoplasmic portion of the chain corresponds to 221 to 281 (RMLMPETARY…KLFSRCFFRL (61 aa)). The chain crosses the membrane as a helical span at residues 282 to 302 (HGRDLFAASFNWFLVDIVFYT). The Extracellular portion of the chain corresponds to 303 to 333 (SNLLLSHIFSHYSKKPSTAENVYDAAFEVAE). Residues 334 to 354 (LGAIIAACSTIPGYWFTVYFI) traverse the membrane as a helical segment. Over 355–361 (DKIGRVK) the chain is Cytoplasmic. The chain crosses the membrane as a helical span at residues 362-382 (IQIMGFFFMAVIYLVAGIPYS). Over 383–396 (WYWSKHEHNNKGFM) the chain is Extracellular. A helical membrane pass occupies residues 397–417 (VLYGLVFFFCNFGPNTTTFII). At 418–431 (PAEHFPARFRSTCH) the chain is on the cytoplasmic side. Residues 432–452 (GISGAAGKLGAIVGTVGFLWA) traverse the membrane as a helical segment. The Extracellular segment spans residues 453–472 (TKKMESDDKNQIYPEVNRMR). The chain crosses the membrane as a helical span at residues 473-493 (IAFLILGGVCIAGILVTYFFT). Residues 494-534 (KETMGRSLEENEHDQDNNAESEDEPQIVDGQSSVSTLLQTR) are Cytoplasmic-facing. The interval 501 to 534 (LEENEHDQDNNAESEDEPQIVDGQSSVSTLLQTR) is disordered. The span at 510 to 519 (NNAESEDEPQ) shows a compositional bias: acidic residues. S514 carries the post-translational modification Phosphoserine. Over residues 522–534 (DGQSSVSTLLQTR) the composition is skewed to polar residues.

It belongs to the major facilitator superfamily. Phosphate:H(+) symporter (TC 2.A.1.9) family. As to expression, in roots.

The protein localises to the membrane. Its function is as follows. High-affinity transporter for external inorganic phosphate. The polypeptide is Probable inorganic phosphate transporter 1-8 (PHT1-8) (Arabidopsis thaliana (Mouse-ear cress)).